Here is a 297-residue protein sequence, read N- to C-terminus: MKPQIYHVDAFTGDPFRGNSAGVVLHADTLSDAQMQLIARELRHSETAFLLKSEESDVRIRYFTPTVEVPICGHATVAAHYVRATVLGLGNTTVWQTSLAGRHRVEIHAEHNDYRITLEQGQPSFEPPLVGEIRAAIITALNLTEDDIVPGAPIQVASTGHAKVMILLKPDVDIDALSPNLAALTAISQQIGCNGFFPFQIRPGKNETDGRMFSPAIGIVEDPVTGNANGPMGAWLVHHGLMAHDGKTLQIQGHQGRALGKEGTVDVTVTIRDNQPENVTISGQAVILFHAEWAITF.

E46 is a catalytic residue.

This sequence belongs to the PhzF family. In terms of assembly, homodimer and homotetramer.

This is an uncharacterized protein from Salmonella typhimurium (strain LT2 / SGSC1412 / ATCC 700720).